A 435-amino-acid polypeptide reads, in one-letter code: Serine/threonine-protein kinase 40 (435 aa).

The region spanning Phe35–Ile332 is the Protein kinase domain. ATP is bound by residues Leu41 to Ile49 and Lys66. Residue Asp197 is the Proton acceptor of the active site.

This sequence belongs to the protein kinase superfamily. CAMK Ser/Thr protein kinase family.

It localises to the nucleus. Its subcellular location is the cytoplasm. It carries out the reaction L-seryl-[protein] + ATP = O-phospho-L-seryl-[protein] + ADP + H(+). The catalysed reaction is L-threonyl-[protein] + ATP = O-phospho-L-threonyl-[protein] + ADP + H(+). Its function is as follows. May be a negative regulator of NF-kappa-B and p53-mediated gene transcription. This is Serine/threonine-protein kinase 40 (Stk40) from Rattus norvegicus (Rat).